The primary structure comprises 287 residues: MHSKPQWLRAKAPTGEVFNETLNIVKLHNLHTVCEEAACPNIGECWNKRHATVMILGSVCTRACAFCNVATGIPDKLDPHEPENLAKAIKKLNLKHVVITSVDRDDLPDGGANQFIQCIEEIRKITSETTIEILTPDFLNKKGAFEAIAVASPDVYNHNIETVPRLYAKIRPRARYFHSLYLLKMVKQINPKVFTKSGLMVGLGETKEEIFQVMDDLRSAEVDFITIGQYLQPTPKHAKLDRYVTPEEFEHYKYIAYSKGFLVVASSPLTRSSYHAEEDFNRLKACR.

7 residues coordinate [4Fe-4S] cluster: Cys-34, Cys-39, Cys-45, Cys-60, Cys-64, Cys-67, and Ser-273. In terms of domain architecture, Radical SAM core spans 46-262 (WNKRHATVMI…KYIAYSKGFL (217 aa)).

It belongs to the radical SAM superfamily. Lipoyl synthase family. [4Fe-4S] cluster serves as cofactor.

The protein resides in the cytoplasm. The enzyme catalyses [[Fe-S] cluster scaffold protein carrying a second [4Fe-4S](2+) cluster] + N(6)-octanoyl-L-lysyl-[protein] + 2 oxidized [2Fe-2S]-[ferredoxin] + 2 S-adenosyl-L-methionine + 4 H(+) = [[Fe-S] cluster scaffold protein] + N(6)-[(R)-dihydrolipoyl]-L-lysyl-[protein] + 4 Fe(3+) + 2 hydrogen sulfide + 2 5'-deoxyadenosine + 2 L-methionine + 2 reduced [2Fe-2S]-[ferredoxin]. It functions in the pathway protein modification; protein lipoylation via endogenous pathway; protein N(6)-(lipoyl)lysine from octanoyl-[acyl-carrier-protein]: step 2/2. Catalyzes the radical-mediated insertion of two sulfur atoms into the C-6 and C-8 positions of the octanoyl moiety bound to the lipoyl domains of lipoate-dependent enzymes, thereby converting the octanoylated domains into lipoylated derivatives. The sequence is that of Lipoyl synthase from Wolbachia sp. subsp. Drosophila simulans (strain wRi).